The following is a 388-amino-acid chain: Alanine racemase 3 (388 aa).

The active-site Proton acceptor; specific for D-alanine is the Lys-41. Lys-41 is subject to N6-(pyridoxal phosphate)lysine. Arg-135 is a binding site for substrate. The active-site Proton acceptor; specific for L-alanine is the Tyr-256. Met-304 contributes to the substrate binding site.

The protein belongs to the alanine racemase family. The cofactor is pyridoxal 5'-phosphate.

The enzyme catalyses L-alanine = D-alanine. The protein operates within amino-acid biosynthesis; D-alanine biosynthesis; D-alanine from L-alanine: step 1/1. Catalyzes the interconversion of L-alanine and D-alanine. May also act on other amino acids. The chain is Alanine racemase 3 (alr3) from Mesorhizobium japonicum (strain LMG 29417 / CECT 9101 / MAFF 303099) (Mesorhizobium loti (strain MAFF 303099)).